The sequence spans 250 residues: Cobalt transport protein CbiM (250 aa).

Positions 1 to 24 (MKYWGTALLGAFCVFFFTPNTAYA) are cleaved as a signal peptide. 6 consecutive transmembrane segments (helical) span residues 32 to 52 (LPAGWCLFWLALSVPFVFWGI), 67 to 87 (MLLGLAGAFVFVLSALKIPSV), 99 to 119 (LGAILFGPAVMSVLGCIVLLF), 122 to 142 (LLLAHGGITTLGANVFSMGVM), 161 to 181 (VAVFLAASLGNMTTYMVTSLQ), and 203 to 223 (IFAITQIPLAITEGLLTVFVF).

The protein belongs to the CbiM family. Forms an energy-coupling factor (ECF) transporter complex composed of an ATP-binding protein (A component, CbiO), a transmembrane protein (T component, CbiQ) and 2 possible substrate-capture proteins (S components, CbiM and CbiN) of unknown stoichimetry.

It is found in the cell membrane. It participates in cofactor biosynthesis; adenosylcobalamin biosynthesis. Part of the energy-coupling factor (ECF) transporter complex CbiMNOQ involved in cobalt import. In Desulforamulus reducens (strain ATCC BAA-1160 / DSM 100696 / MI-1) (Desulfotomaculum reducens), this protein is Cobalt transport protein CbiM.